We begin with the raw amino-acid sequence, 130 residues long: Histone H2A type 1 (130 aa).

The segment at 1–22 is disordered; it reads MSGRGKQGGKARAKAKTRSSRA. Residue Ser2 is modified to N-acetylserine. Position 2 is a phosphoserine; by RPS6KA5 (Ser2). Position 4 is a citrulline; alternate (Arg4). At Arg4 the chain carries Symmetric dimethylarginine; by PRMT5; alternate. Lys6 carries the N6-(2-hydroxyisobutyryl)lysine modification. The span at 7-19 shows a compositional bias: basic residues; the sequence is QGGKARAKAKTRS. Position 10 is an N6-(2-hydroxyisobutyryl)lysine; alternate (Lys10). N6-lactoyllysine; alternate is present on Lys10. Lys10 carries the N6-succinyllysine; alternate modification. Residues Lys14 and Lys16 each participate in a glycyl lysine isopeptide (Lys-Gly) (interchain with G-Cter in ubiquitin) cross-link. N6-(2-hydroxyisobutyryl)lysine; alternate is present on Lys37. Lys37 carries the N6-(beta-hydroxybutyryl)lysine; alternate modification. At Lys37 the chain carries N6-crotonyllysine; alternate. N6-(2-hydroxyisobutyryl)lysine is present on residues Lys75 and Lys76. At Lys96 the chain carries N6-(2-hydroxyisobutyryl)lysine; alternate. Lys96 is modified (N6-succinyllysine; alternate). Lys96 is subject to N6-glutaryllysine; alternate. Lys100 is modified (N6-glutaryllysine). Gln105 is subject to N5-methylglutamine. Lys119 carries the N6-(2-hydroxyisobutyryl)lysine; alternate modification. Residues Lys119 and Lys120 each carry the N6-crotonyllysine; alternate modification. Lys119 and Lys120 each carry N6-glutaryllysine; alternate. Lys120 is covalently cross-linked (Glycyl lysine isopeptide (Lys-Gly) (interchain with G-Cter in ubiquitin); alternate). Residue Thr121 is modified to Phosphothreonine; by DCAF1. The residue at position 126 (Lys126) is an N6-crotonyllysine; alternate. Lys126 is modified (N6-glutaryllysine; alternate).

The protein belongs to the histone H2A family. In terms of assembly, the nucleosome is a histone octamer containing two molecules each of H2A, H2B, H3 and H4 assembled in one H3-H4 heterotetramer and two H2A-H2B heterodimers. The octamer wraps approximately 147 bp of DNA. Interacts with VRK1; the interaction is mediated by the nucleosome acidic patch, a cluster of negatively charged residues of H2A and H2B forming a cleft within the nucleosome core. Deiminated on Arg-4 in granulocytes upon calcium entry. In terms of processing, monoubiquitination of Lys-120 (H2AK119Ub) by RING1, TRIM37 and RNF2/RING2 complex gives a specific tag for epigenetic transcriptional repression and participates in X chromosome inactivation of female mammals. It is involved in the initiation of both imprinted and random X inactivation. Ubiquitinated H2A is enriched in inactive X chromosome chromatin. Ubiquitination of H2A functions downstream of methylation of 'Lys-27' of histone H3 (H3K27me). H2AK119Ub by RNF2/RING2 can also be induced by ultraviolet and may be involved in DNA repair. Following DNA double-strand breaks (DSBs), it is ubiquitinated through 'Lys-63' linkage of ubiquitin moieties by the E2 ligase UBE2N and the E3 ligases RNF8 and RNF168, leading to the recruitment of repair proteins to sites of DNA damage. Ubiquitination at Lys-14 and Lys-16 (H2AK13Ub and H2AK15Ub, respectively) in response to DNA damage is initiated by RNF168 that mediates monoubiquitination at these 2 sites, and 'Lys-63'-linked ubiquitin are then conjugated to monoubiquitin; RNF8 is able to extend 'Lys-63'-linked ubiquitin chains in vitro. H2AK119Ub and ionizing radiation-induced 'Lys-63'-linked ubiquitination (H2AK13Ub and H2AK15Ub) are distinct events. Post-translationally, phosphorylation on Ser-2 (H2AS1ph) is enhanced during mitosis. Phosphorylation on Ser-2 by RPS6KA5/MSK1 directly represses transcription. Acetylation of H3 inhibits Ser-2 phosphorylation by RPS6KA5/MSK1. Phosphorylation at Thr-121 (H2AT120ph) by DCAF1 is present in the regulatory region of many tumor suppresor genes and down-regulates their transcription. Symmetric dimethylation on Arg-4 by the PRDM1/PRMT5 complex may play a crucial role in the germ-cell lineage. In terms of processing, glutamine methylation at Gln-105 (H2AQ104me) by FBL is specifically dedicated to polymerase I. It is present at 35S ribosomal DNA locus and impairs binding of the FACT complex. Post-translationally, crotonylation (Kcr) is specifically present in male germ cells and marks testis-specific genes in post-meiotic cells, including X-linked genes that escape sex chromosome inactivation in haploid cells. Crotonylation marks active promoters and enhancers and confers resistance to transcriptional repressors. It is also associated with post-meiotically activated genes on autosomes. Lactylated in macrophages by EP300/P300 by using lactoyl-CoA directly derived from endogenous or exogenous lactate, leading to stimulates gene transcription.

The protein resides in the nucleus. Its subcellular location is the chromosome. Its function is as follows. Core component of nucleosome. Nucleosomes wrap and compact DNA into chromatin, limiting DNA accessibility to the cellular machineries which require DNA as a template. Histones thereby play a central role in transcription regulation, DNA repair, DNA replication and chromosomal stability. DNA accessibility is regulated via a complex set of post-translational modifications of histones, also called histone code, and nucleosome remodeling. The polypeptide is Histone H2A type 1 (Bos taurus (Bovine)).